Consider the following 158-residue polypeptide: Succinate dehydrogenase assembly factor 2, mitochondrial (158 aa).

The N-terminal 23 residues, 1–23, are a transit peptide targeting the mitochondrion; sequence MLRQLLATARRLLLPLATPKRCL.

The protein belongs to the SDHAF2 family. In terms of assembly, interacts with the flavoprotein subunit within the SDH catalytic dimer.

It localises to the mitochondrion matrix. Plays an essential role in the assembly of succinate dehydrogenase (SDH), an enzyme complex (also referred to as respiratory complex II) that is a component of both the tricarboxylic acid (TCA) cycle and the mitochondrial electron transport chain, and which couples the oxidation of succinate to fumarate with the reduction of ubiquinone (coenzyme Q) to ubiquinol. Required for flavinylation (covalent attachment of FAD) of the flavoprotein subunit of the SDH catalytic dimer. In Drosophila virilis (Fruit fly), this protein is Succinate dehydrogenase assembly factor 2, mitochondrial.